Consider the following 349-residue polypeptide: Isopentenyl-diphosphate delta-isomerase (349 aa).

6–7 (RK) lines the substrate pocket. FMN contacts are provided by residues 62–64 (AMT), Ser93, and Asn122. Gln152 contacts substrate. Glu153 is a binding site for Mg(2+). FMN contacts are provided by residues Lys184, Thr214, 259 to 261 (GVR), and 280 to 281 (AG).

This sequence belongs to the IPP isomerase type 2 family. As to quaternary structure, homooctamer. Dimer of tetramers. FMN serves as cofactor. The cofactor is NADPH. It depends on Mg(2+) as a cofactor.

The protein localises to the cytoplasm. It catalyses the reaction isopentenyl diphosphate = dimethylallyl diphosphate. In terms of biological role, involved in the biosynthesis of isoprenoids. Catalyzes the 1,3-allylic rearrangement of the homoallylic substrate isopentenyl (IPP) to its allylic isomer, dimethylallyl diphosphate (DMAPP). The chain is Isopentenyl-diphosphate delta-isomerase from Geobacillus sp. (strain WCH70).